We begin with the raw amino-acid sequence, 1288 residues long: 5-oxoprolinase (1288 aa).

T151 is modified (phosphothreonine). A disordered region spans residues 1248–1272; sequence PGGGGYGDPEDPAPPPGSPPQALAF. At S1265 the chain carries Phosphoserine.

The protein belongs to the oxoprolinase family. As to quaternary structure, homodimer.

It is found in the cytoplasm. It localises to the cytosol. It catalyses the reaction 5-oxo-L-proline + ATP + 2 H2O = L-glutamate + ADP + phosphate + H(+). Functionally, catalyzes the cleavage of 5-oxo-L-proline to form L-glutamate coupled to the hydrolysis of ATP to ADP and inorganic phosphate. The sequence is that of 5-oxoprolinase from Homo sapiens (Human).